The chain runs to 125 residues: Ribonuclease P protein component (125 aa).

This sequence belongs to the RnpA family. Consists of a catalytic RNA component (M1 or rnpB) and a protein subunit.

The catalysed reaction is Endonucleolytic cleavage of RNA, removing 5'-extranucleotides from tRNA precursor.. RNaseP catalyzes the removal of the 5'-leader sequence from pre-tRNA to produce the mature 5'-terminus. It can also cleave other RNA substrates such as 4.5S RNA. The protein component plays an auxiliary but essential role in vivo by binding to the 5'-leader sequence and broadening the substrate specificity of the ribozyme. This is Ribonuclease P protein component from Clostridium botulinum (strain Alaska E43 / Type E3).